Consider the following 647-residue polypeptide: LIM domain kinase 1 (647 aa).

LIM zinc-binding domains follow at residues 25–75 (CASC…CKKD) and 84–137 (CHGC…CGQC). A PDZ domain is found at 165 to 258 (LVSIPASAHG…LLQLTLEHDP (94 aa)). Position 210 is a phosphoserine (S210). T229 is subject to Phosphothreonine. Residues 256 to 316 (HDPHDSLGHG…SLVSPASQRK (61 aa)) are disordered. Over residues 278 to 289 (HTPSGQAGSSAR) the composition is skewed to polar residues. Phosphoserine is present on residues S298, S302, S307, and S310. The residue at position 323 (S323) is a Phosphoserine; by MAPKAPK2. S337 is subject to Phosphoserine. Positions 339-604 (LIHGEVLGKG…PSFVKLEQWL (266 aa)) constitute a Protein kinase domain. Residues 345 to 353 (LGKGCFGQA) and K368 each bind ATP. D460 is a catalytic residue. Residue T508 is modified to Phosphothreonine; by ROCK1 and PAK1.

It belongs to the protein kinase superfamily. TKL Ser/Thr protein kinase family. Interacts (via LIM domain) with the cytoplasmic domain of NRG1. Interacts with NISCH. Interacts with RLIM and RNF6. Self-associates to form homodimers. Interacts with HSP90AA1; this interaction promotes LIMK1 dimerization and subsequent transphosphorylation. Interacts with CDKN1C. Interacts with SSH1. Interacts with ROCK1. Interacts (via LIM zinc-binding domains) with FAM89B/LRAP25 (via LRR repeat). Forms a tripartite complex with CDC42BPA, CDC42BPB and FAM89B/LRAP25. Autophosphorylated. Phosphorylated on Thr-508 by ROCK1 and PAK1, resulting in activation. Phosphorylated by PAK4 which increases the ability of LIMK1 to phosphorylate cofilin. Phosphorylated at Ser-323 by MAPKAPK2 during activation of VEGFA-induced signaling, which results in activation of LIMK1 and promotion of actin reorganization, cell migration, and tubule formation of endothelial cells. Dephosphorylated and inactivated by SSH1. Phosphorylated by CDC42BP. In terms of processing, ubiquitinated. 'Lys-48'-linked polyubiquitination by RNF6 leads to proteasomal degradation through the 26S proteasome, modulating LIMK1 levels in the growth cone and its effect on axonal outgrowth. Also polyubiquitinated by RLIM.

The protein resides in the cytoplasm. It localises to the nucleus. Its subcellular location is the cytoskeleton. The protein localises to the cell projection. It is found in the lamellipodium. The catalysed reaction is L-seryl-[protein] + ATP = O-phospho-L-seryl-[protein] + ADP + H(+). It carries out the reaction L-threonyl-[protein] + ATP = O-phospho-L-threonyl-[protein] + ADP + H(+). Functionally, serine/threonine-protein kinase that plays an essential role in the regulation of actin filament dynamics. Acts downstream of several Rho family GTPase signal transduction pathways. Activated by upstream kinases including ROCK1, PAK1 and PAK4, which phosphorylate LIMK1 on a threonine residue located in its activation loop. LIMK1 subsequently phosphorylates and inactivates the actin binding/depolymerizing factors cofilin-1/CFL1, cofilin-2/CFL2 and destrin/DSTN, thereby preventing the cleavage of filamentous actin (F-actin), and stabilizing the actin cytoskeleton. In this way LIMK1 regulates several actin-dependent biological processes including cell motility, cell cycle progression, and differentiation. Phosphorylates TPPP on serine residues, thereby promoting microtubule disassembly. Stimulates axonal outgrowth and may be involved in brain development. The protein is LIM domain kinase 1 (Limk1) of Rattus norvegicus (Rat).